A 95-amino-acid polypeptide reads, in one-letter code: Cliotide T1 (95 aa).

Positions 1-30 (GIPCGESCVFIPCITGAIGCSCKSKVCYRN) form a cross-link, cyclopeptide (Gly-Asn). Intrachain disulfides connect Cys4/Cys20, Cys8/Cys22, and Cys13/Cys27. Residues 31–95 (HVIAAEAKTM…KDHLKMSITN (65 aa)) constitute a propeptide, removed in mature form.

Contains 3 disulfide bonds. In terms of processing, this is a cyclic peptide. As to expression, expressed in flower, stem, shoot, root, leaf, seed, pod and nodule (at protein level).

Its function is as follows. Probably participates in a plant defense mechanism. Active against Gram-negative bacteria E.coli ATCC 700926 (MIC=1.1 uM), K.pneumoniae ATTC 13883 (MIC=2.7 uM) and P.aeruginosa ATCC 39018 (MIC=4.7 uM). Has hemolytic and cytotoxic activity. This chain is Cliotide T1, found in Clitoria ternatea (Butterfly pea).